The chain runs to 462 residues: Microspherule protein 1 (462 aa).

An N-acetylmethionine modification is found at Met1. The tract at residues 1–130 is disordered; it reads MDKDSQGLLD…KSKQPLQVTK (130 aa). Ser22 is modified (phosphoserine). Basic residues predominate over residues 43–55; sequence PKRRSSSRFIKRK. Residue Ser102 is modified to Phosphoserine. Thr103 is modified (phosphothreonine). Residues 103 to 112 are compositionally biased toward pro residues; it reads TPVPPSPAPA. A Phosphoserine modification is found at Ser108. The short motif at 113–123 is the Nuclear localization signal element; sequence PGLTKRVKKSK. Residues Lys123 and Lys130 each carry the N6-acetyllysine modification. Phosphoserine is present on Ser282. A coiled-coil region spans residues 301-335; sequence LEHELMVADRRQKREIRQLEQELHKWQVLVDSITG. An FHA domain is found at 363–419; it reads ITLGRATKDNQIDVDLSLEGPAWKISRKQGVIKLKNNGDFFIANEGRRPIYIDGRPV. The UBR5-degron signature appears at 389–396; that stretch reads RKQGVIKL.

In terms of assembly, component of the chromatin remodeling INO80 complex; specifically part of a complex module associated with the N-terminus of INO80. Component of some MLL1/MLL complex, at least composed of the core components KMT2A/MLL1, ASH2L, HCFC1, WDR5 and RBBP5, as well as the facultative components BACC1, CHD8, E2F6, HSP70, INO80C, KANSL1, LAS1L, MAX, MCRS1, MGA, KAT8/MOF, PELP1, PHF20, PRP31, RING2, RUVB1/TIP49A, RUVB2/TIP49B, SENP3, TAF1, TAF4, TAF6, TAF7, TAF9 and TEX10. Component of the NSL complex at least composed of MOF/KAT8, KANSL1, KANSL2, KANSL3, MCRS1, PHF20, OGT1/OGT, WDR5 and HCFC1. Interacts with NOP2. Interacts with PINX1. Interacts with TERT. Interacts with CCDC85B. Interacts with DAXX. Interacts (via N-terminus) with FMR1 (via phosphorylated form). Interacts with FXR1 and FXR2. Interacts (via C-terminus) with NDE1 (via C-terminus); phosphorylation of NDE1 inhibits the interaction. Interacts (via C-terminus) with ZNF375. Interacts (via C-terminus) with active GTP-bound RHEB (via N-terminus) under conditions of high amino acid concentration; the interaction promotes mTORC1 complex activation by RHEB. Interacts (via N-terminus) with the mTORC1 complex; the interaction ensures mTORC1 activation by RHEB. Interacts with DYNC1I1; the interaction is required for the proper distribution of centriolar satellites. Interacts with TTBK2; the interaction is required for recruitment of TTBK2 to the mother centriole. Interacts with KIF2A; the interaction occurs during mitosis and facilitates chromosome alignment. As to quaternary structure, (Microbial infection) Interacts with Herpes simplex virus ICP22. Post-translationally, ubiquitinated by UBR5 when not assembled in the INO80 complex, leading to its degradation: UBR5 recognizes and binds a degron that is not accessible when MCRS1 is part of the INO80 complex. In terms of processing, phosphorylated by AURKA on Ser-35 and/or Ser-36 during mitosis which is required for kinetochore fiber assembly and mitotic progression but not for spindle localization or for chromosome-induced microtuble aster formation. Also phosphorylated by AURKA on Ser-85 and/or Ser-87. Phosphorylated by TTK/MPS1 which enhances recruitment of KIF2A to the minus end of spindle microtubules and facilitates precise chromosome segregation. In terms of tissue distribution, detected in testis, and at lower levels in spleen, thymus, prostate, uterus, small intestine, colon and leukocytes.

The protein resides in the nucleus. It localises to the nucleolus. It is found in the cytoplasm. The protein localises to the cytoskeleton. Its subcellular location is the microtubule organizing center. The protein resides in the centrosome. It localises to the spindle pole. It is found in the chromosome. The protein localises to the centromere. Its subcellular location is the kinetochore. The protein resides in the lysosome. It localises to the centriolar satellite. Modulates the transcription repressor activity of DAXX by recruiting it to the nucleolus. As part of the NSL complex, may be involved in acetylation of nucleosomal histone H4 on several lysine residues. Putative regulatory component of the chromatin remodeling INO80 complex which is involved in transcriptional regulation, DNA replication and probably DNA repair. May also be an inhibitor of TERT telomerase activity. Binds to G-quadruplex structures in mRNA. Binds to RNA homomer poly(G) and poly(U). Maintains RHEB at the lysosome in its active GTP-bound form and prevents its interaction with the mTORC1 complex inhibitor TSC2, ensuring activation of the mTORC1 complex by RHEB. Stabilizes the minus ends of kinetochore fibers by protecting them from depolymerization, ensuring functional spindle assembly during mitosis. Following phosphorylation by TTK/MPS1, enhances recruitment of KIF2A to the minus ends of mitotic spindle microtubules which promotes chromosome alignment. Regulates the morphology of microtubule minus ends in mitotic spindle by maintaining them in a closed conformation characterized by the presence of an electron-dense cap. Regulates G2/M transition and spindle assembly during oocyte meiosis. Mediates histone modifications and transcriptional regulation in germinal vesicle oocytes which are required for meiotic progression. Also regulates microtubule nucleation and spindle assembly by activating aurora kinases during oocyte meiosis. Contributes to the establishment of centriolar satellites and also plays a role in primary cilium formation by recruiting TTBK2 to the mother centriole which is necessary for removal of the CP110 cap from the mother centriole, an early step in ciliogenesis. Required for epiblast development during early embryogenesis. Essential for cell viability. The chain is Microspherule protein 1 (MCRS1) from Homo sapiens (Human).